The sequence spans 86 residues: Small ribosomal subunit protein bS20 (86 aa).

Over residues 1-11 (MANIKSQIKRN) the composition is skewed to polar residues. The segment at 1-20 (MANIKSQIKRNLTNEKRHQA) is disordered.

Belongs to the bacterial ribosomal protein bS20 family.

Binds directly to 16S ribosomal RNA. In Acholeplasma laidlawii (strain PG-8A), this protein is Small ribosomal subunit protein bS20.